The sequence spans 174 residues: NADH-ubiquinone oxidoreductase chain 6 (174 aa).

Helical transmembrane passes span 25-45, 48-68, 82-102, and 143-163; these read SMGL…GIYV, FWFS…LFIY, FKLT…FFIL, and LITL…VKIT.

It belongs to the complex I subunit 6 family.

The protein resides in the mitochondrion membrane. It carries out the reaction a ubiquinone + NADH + 5 H(+)(in) = a ubiquinol + NAD(+) + 4 H(+)(out). Core subunit of the mitochondrial membrane respiratory chain NADH dehydrogenase (Complex I) that is believed to belong to the minimal assembly required for catalysis. Complex I functions in the transfer of electrons from NADH to the respiratory chain. The immediate electron acceptor for the enzyme is believed to be ubiquinone. This is NADH-ubiquinone oxidoreductase chain 6 (mt:ND6) from Anopheles gambiae (African malaria mosquito).